The primary structure comprises 273 residues: 4-hydroxy-tetrahydrodipicolinate reductase (273 aa).

NAD(+) is bound by residues 12–17 (GAGGRM) and Glu-38. Arg-39 lines the NADP(+) pocket. Residues 102–104 (GTT) and 126–129 (AANF) each bind NAD(+). His-159 (proton donor/acceptor) is an active-site residue. His-160 lines the (S)-2,3,4,5-tetrahydrodipicolinate pocket. The active-site Proton donor is the Lys-163. 169-170 (GT) contacts (S)-2,3,4,5-tetrahydrodipicolinate.

Belongs to the DapB family. In terms of assembly, homotetramer.

Its subcellular location is the cytoplasm. The enzyme catalyses (S)-2,3,4,5-tetrahydrodipicolinate + NAD(+) + H2O = (2S,4S)-4-hydroxy-2,3,4,5-tetrahydrodipicolinate + NADH + H(+). The catalysed reaction is (S)-2,3,4,5-tetrahydrodipicolinate + NADP(+) + H2O = (2S,4S)-4-hydroxy-2,3,4,5-tetrahydrodipicolinate + NADPH + H(+). Its pathway is amino-acid biosynthesis; L-lysine biosynthesis via DAP pathway; (S)-tetrahydrodipicolinate from L-aspartate: step 4/4. Functionally, catalyzes the conversion of 4-hydroxy-tetrahydrodipicolinate (HTPA) to tetrahydrodipicolinate. The protein is 4-hydroxy-tetrahydrodipicolinate reductase of Salmonella dublin (strain CT_02021853).